We begin with the raw amino-acid sequence, 189 residues long: MAKVNLEQIEHAVRLILEAIGDDPNREGVLDTPKRVAKMYAEVFSGMHEDPKEHLHKVFGEDHEELVLVKDIPFYSMCEHHLVPFYGVAHVAYIPQGGKVTGLSKLARTVDTIARRPQLQERITSTVANSIMEVLEPHGVMVVVEAEHMCMTMRGVKKPGAKTVTTAVRGVLENDAAARSEILSFIKTK.

The Zn(2+) site is built by Cys-78, His-81, and Cys-150.

Belongs to the GTP cyclohydrolase I family. As to quaternary structure, homomer.

It carries out the reaction GTP + H2O = 7,8-dihydroneopterin 3'-triphosphate + formate + H(+). It participates in cofactor biosynthesis; 7,8-dihydroneopterin triphosphate biosynthesis; 7,8-dihydroneopterin triphosphate from GTP: step 1/1. The chain is GTP cyclohydrolase 1 from Bacillus anthracis (strain A0248).